Consider the following 901-residue polypeptide: Modifier of cell death (901 aa).

Disordered regions lie at residues 147–169 (AQKRGRFPPQARSSLSPQKPRAA) and 218–245 (PRKSAPWQEETAANGGPQSTSLIRSPSP). The segment at 259-282 (FKCAECGDGFPVMDRLCDHMIKQH) adopts a C2H2-type zinc-finger fold. Disordered regions lie at residues 494–528 (KKEHMDYDEPDPNIPSTSAQALGYNPDDDEGDDVP), 682–717 (QERVHQPERRPRRSAAPASPAKPQYRPQPPARSHEE), and 779–901 (HKAI…WDDN). A compositionally biased stretch (low complexity) spans 817 to 828 (EAAAKLIQAENE). Acidic residues predominate over residues 829–840 (MVVEEEEVEEPP). A compositionally biased stretch (basic and acidic residues) spans 846–866 (QVPKEKEVEVAEAEKLPEQVK).

Its function is as follows. Promotes programmed cell death. Its role in programmed cell death may be in conjunction with cell cycle regulatory factor efl-1 and the synthetic multivulva class B proteins dpl-1 and lin-35, and is independent of the ced-1, ced-8 and ced-9 pathways. This chain is Modifier of cell death, found in Caenorhabditis elegans.